The following is a 414-amino-acid chain: MAPTMGVDDLLASPQDDRSPTLLEKDLILAAEVGQALLEKNEELASQIMQMESEMEAMQQEKHMVQRRLEVRDLEASQREAELQADISALRAQLEQKHIQGRDRRREESEQLIQLSNHNQKLVEQLAEAVSLEHTLRTELRTLREEMEDTSFSKSISSARLDSLQAENRVLKERCTHMDERLKSTQEDNERLRSERDGLRERAIELQTSLKDKETELEQEHSTVFQLRTVNRTLQQRVQALGEEASLGEATCFPLSLQSEIQQCQAKETILAHSSVLREKEEEIQRLQKELQSRETELEGLREEVKLFRNSPGKPTYKALEEEMILARQERDALNQQLLNTIRHKVALSQEVESWQEDMRLVICQQVQLQQQEKEKENNKERTGFQRGTRTTKSLRLRGEEGRKGFFSALFGGD.

Residues 34–341 (GQALLEKNEE…DALNQQLLNT (308 aa)) adopt a coiled-coil conformation. The segment covering 372–384 (QEKEKENNKERTG) has biased composition (basic and acidic residues). A disordered region spans residues 372–399 (QEKEKENNKERTGFQRGTRTTKSLRLRG).

This is BICD family-like cargo adapter 2 (bicdl2) from Danio rerio (Zebrafish).